Reading from the N-terminus, the 200-residue chain is Recombination protein RecR (200 aa).

The segment at 60 to 75 (CVYCQALTEDDVCNIC) adopts a C4-type zinc-finger fold. One can recognise a Toprim domain in the interval 83-177 (TKLCIIESML…KISRIGFGVP (95 aa)).

The protein belongs to the RecR family.

Functionally, may play a role in DNA repair. It seems to be involved in an RecBC-independent recombinational process of DNA repair. It may act with RecF and RecO. This Francisella tularensis subsp. novicida (strain U112) protein is Recombination protein RecR.